The primary structure comprises 208 residues: UPF0637 protein Bcer98_2662 (208 aa).

Belongs to the UPF0637 family.

This Bacillus cytotoxicus (strain DSM 22905 / CIP 110041 / 391-98 / NVH 391-98) protein is UPF0637 protein Bcer98_2662.